The sequence spans 1043 residues: Phosphatidylinositol 4,5-bisphosphate 3-kinase catalytic subunit delta isoform (1043 aa).

In terms of domain architecture, PI3K-ABD spans 16–105 (ESQSVVVDFL…LPVLRLVARE (90 aa)). A PI3K-RBD domain is found at 187 to 278 (NRALLVNVKF…GLTPHLTMVH (92 aa)). Residues 287-312 (DEQSNPAPQVQKPRAKPPPIPAKKPS) are disordered. A C2 PI3K-type domain is found at 319–476 (LEQPFSIELI…SAAALVIYLP (158 aa)). The 178-residue stretch at 496–673 (RHGERGRITE…GLIMEAYCRG (178 aa)) folds into the PIK helical domain. Y523 carries the phosphotyrosine modification. The PI3K/PI4K catalytic domain maps to 744–1026 (CVEQCTFMDS…KFNEALRESW (283 aa)). The segment at 750-756 (FMDSKMK) is G-loop. Residues 889-897 (GIGDRHSDN) are catalytic loop. The activation loop stretch occupies residues 908 to 934 (HIDFGHFLGNFKTKFGINRERVPFILT). S1038 carries the post-translational modification Phosphoserine; by autocatalysis.

Belongs to the PI3/PI4-kinase family. As to quaternary structure, heterodimer of a catalytic subunit PIK3CD and a p85 regulatory subunit (PIK3R1, PIK3R2 or PIK3R3). Interacts with ERAS and HRAS. Autophosphorylation on Ser-1038 results in the almost complete inactivation of the lipid kinase activity. As to expression, abundantly expressed in adult mouse spleen as well as in testis. Isoform 1 is expressed in spleen and lung (at protein level). Isoform 1 is expressed predominantly in leukocytes.

The protein resides in the cytoplasm. The enzyme catalyses a 1,2-diacyl-sn-glycero-3-phospho-(1D-myo-inositol-4,5-bisphosphate) + ATP = a 1,2-diacyl-sn-glycero-3-phospho-(1D-myo-inositol-3,4,5-trisphosphate) + ADP + H(+). It carries out the reaction a 1,2-diacyl-sn-glycero-3-phospho-(1D-myo-inositol) + ATP = a 1,2-diacyl-sn-glycero-3-phospho-(1D-myo-inositol-3-phosphate) + ADP + H(+). The catalysed reaction is 1-octadecanoyl-2-(5Z,8Z,11Z,14Z)-eicosatetraenoyl-sn-glycero-3-phospho-1D-myo-inositol 4,5-bisphosphate + ATP = 1-octadecanoyl-2-(5Z,8Z,11Z,14Z-eicosatetraenoyl)-sn-glycero-3-phospho-(1D-myo-inositol 3,4,5-triphosphate) + ADP + H(+). The protein operates within phospholipid metabolism; phosphatidylinositol phosphate biosynthesis. Activated by growth factors and cytokine receptors through a tyrosine-kinase-dependent mechanism. Activated by RAS. IC87114 inhibits lipid kinase activity and is selective in cells at doses up to 5-10 uM. Among other effects, IC87114 reduces allergic responses, prevents the recruitment of antigen-specific T cells into target tissue, and affects natural killer cell chemotaxis. Phosphoinositide-3-kinase (PI3K) phosphorylates phosphatidylinositol (PI) and its phosphorylated derivatives at position 3 of the inositol ring to produce 3-phosphoinositides. Uses ATP and PtdIns(4,5)P2 (phosphatidylinositol 4,5-bisphosphate) to generate phosphatidylinositol 3,4,5-trisphosphate (PIP3). PIP3 plays a key role by recruiting PH domain-containing proteins to the membrane, including AKT1 and PDPK1, activating signaling cascades involved in cell growth, survival, proliferation, motility and morphology. Mediates immune responses. Plays a role in B-cell development, proliferation, migration, and function. Required for B-cell receptor (BCR) signaling. Mediates B-cell proliferation response to anti-IgM, anti-CD40 and IL4 stimulation. Promotes cytokine production in response to TLR4 and TLR9. Required for antibody class switch mediated by TLR9. Involved in the antigen presentation function of B-cells. Involved in B-cell chemotaxis in response to CXCL13 and sphingosine 1-phosphate (S1P). Required for proliferation, signaling and cytokine production of naive, effector and memory T-cells. Required for T-cell receptor (TCR) signaling. Mediates TCR signaling events at the immune synapse. Activation by TCR leads to antigen-dependent memory T-cell migration and retention to antigenic tissues. Together with PIK3CG participates in T-cell development. Contributes to T-helper cell expansion and differentiation. Required for T-cell migration mediated by homing receptors SELL/CD62L, CCR7 and S1PR1 and antigen dependent recruitment of T-cells. Together with PIK3CG is involved in natural killer (NK) cell development and migration towards the sites of inflammation. Participates in NK cell receptor activation. Plays a role in NK cell maturation and cytokine production. Together with PIK3CG is involved in neutrophil chemotaxis and extravasation. Together with PIK3CG participates in neutrophil respiratory burst. Plays important roles in mast-cell development and mast cell mediated allergic response. Involved in stem cell factor (SCF)-mediated proliferation, adhesion and migration. Required for allergen-IgE-induced degranulation and cytokine release. The lipid kinase activity is required for its biological function. This chain is Phosphatidylinositol 4,5-bisphosphate 3-kinase catalytic subunit delta isoform (Pik3cd), found in Mus musculus (Mouse).